Reading from the N-terminus, the 728-residue chain is 1,4-alpha-glucan branching enzyme GlgB (728 aa).

The active-site Nucleophile is the aspartate 405. Glutamate 458 (proton donor) is an active-site residue.

This sequence belongs to the glycosyl hydrolase 13 family. GlgB subfamily. In terms of assembly, monomer.

The enzyme catalyses Transfers a segment of a (1-&gt;4)-alpha-D-glucan chain to a primary hydroxy group in a similar glucan chain.. Its pathway is glycan biosynthesis; glycogen biosynthesis. Functionally, catalyzes the formation of the alpha-1,6-glucosidic linkages in glycogen by scission of a 1,4-alpha-linked oligosaccharide from growing alpha-1,4-glucan chains and the subsequent attachment of the oligosaccharide to the alpha-1,6 position. The chain is 1,4-alpha-glucan branching enzyme GlgB from Klebsiella pneumoniae subsp. pneumoniae (strain ATCC 700721 / MGH 78578).